A 937-amino-acid chain; its full sequence is Periplasmic nitrate reductase (937 aa).

Positions 1 to 31 (MSMNRREFLKTTAAAAAASAVGISIPSEAKA) form a signal peptide, tat-type signal. Residues 40-96 (WQWDKAVCRFCGTGCGIMVAVKDDKIVAVKGDPESPVNRGINCIKGYFNAKIMYGAD) enclose the 4Fe-4S Mo/W bis-MGD-type domain. Positions 47, 50, 54, and 82 each coordinate [4Fe-4S] cluster. Mo-bis(molybdopterin guanine dinucleotide) contacts are provided by residues lysine 84, glutamine 152, asparagine 177, cysteine 181, 214–221 (WGANMAEM), methionine 422, glutamine 426, asparagine 532, lysine 580, aspartate 607, and 827–836 (TGRVLEHWHS). Position 903 (tryptophan 903) interacts with substrate. 2 residues coordinate Mo-bis(molybdopterin guanine dinucleotide): asparagine 911 and lysine 928.

This sequence belongs to the prokaryotic molybdopterin-containing oxidoreductase family. NasA/NapA/NarB subfamily. Component of the periplasmic nitrate reductase NapAB complex composed of NapA and NapB. [4Fe-4S] cluster serves as cofactor. Mo-bis(molybdopterin guanine dinucleotide) is required as a cofactor. In terms of processing, predicted to be exported by the Tat system. The position of the signal peptide cleavage has not been experimentally proven.

It localises to the periplasm. It carries out the reaction 2 Fe(II)-[cytochrome] + nitrate + 2 H(+) = 2 Fe(III)-[cytochrome] + nitrite + H2O. Catalytic subunit of the periplasmic nitrate reductase complex NapAB. Receives electrons from NapB and catalyzes the reduction of nitrate to nitrite. The protein is Periplasmic nitrate reductase of Nautilia profundicola (strain ATCC BAA-1463 / DSM 18972 / AmH).